A 320-amino-acid chain; its full sequence is Lipoyl synthase (320 aa).

[4Fe-4S] cluster is bound by residues Cys67, Cys72, Cys78, Cys93, Cys97, Cys100, and Ser307. In terms of domain architecture, Radical SAM core spans Phe79–Glu296.

It belongs to the radical SAM superfamily. Lipoyl synthase family. [4Fe-4S] cluster serves as cofactor.

The protein resides in the cytoplasm. It catalyses the reaction [[Fe-S] cluster scaffold protein carrying a second [4Fe-4S](2+) cluster] + N(6)-octanoyl-L-lysyl-[protein] + 2 oxidized [2Fe-2S]-[ferredoxin] + 2 S-adenosyl-L-methionine + 4 H(+) = [[Fe-S] cluster scaffold protein] + N(6)-[(R)-dihydrolipoyl]-L-lysyl-[protein] + 4 Fe(3+) + 2 hydrogen sulfide + 2 5'-deoxyadenosine + 2 L-methionine + 2 reduced [2Fe-2S]-[ferredoxin]. The protein operates within protein modification; protein lipoylation via endogenous pathway; protein N(6)-(lipoyl)lysine from octanoyl-[acyl-carrier-protein]: step 2/2. Catalyzes the radical-mediated insertion of two sulfur atoms into the C-6 and C-8 positions of the octanoyl moiety bound to the lipoyl domains of lipoate-dependent enzymes, thereby converting the octanoylated domains into lipoylated derivatives. The sequence is that of Lipoyl synthase from Haemophilus influenzae (strain PittGG).